The sequence spans 224 residues: 7-cyano-7-deazaguanine synthase (224 aa).

9–19 (LSGGLDSATVL) lines the ATP pocket. Zn(2+) is bound by residues cysteine 189, cysteine 199, cysteine 202, and cysteine 205.

Belongs to the QueC family. It depends on Zn(2+) as a cofactor.

The enzyme catalyses 7-carboxy-7-deazaguanine + NH4(+) + ATP = 7-cyano-7-deazaguanine + ADP + phosphate + H2O + H(+). It participates in purine metabolism; 7-cyano-7-deazaguanine biosynthesis. Its function is as follows. Catalyzes the ATP-dependent conversion of 7-carboxy-7-deazaguanine (CDG) to 7-cyano-7-deazaguanine (preQ(0)). This Ralstonia pickettii (strain 12J) protein is 7-cyano-7-deazaguanine synthase.